A 1269-amino-acid chain; its full sequence is Regulator of nonsense transcripts 2 (1269 aa).

2 disordered regions span residues 1–125 (MPAE…EKEE) and 143–162 (LRSK…FFSR). The stretch at 57–133 (KKRLEEDKRK…EESLQLHQEA (77 aa)) forms a coiled coil. Residues 94–132 (KKKQEEEERKKQEEQAKRQQEEAAAQLKEKEESLQLHQE) are sufficient for interaction with UPF1. Residues 168 to 396 (KKNTAFVKKL…KGELSEDRHK (229 aa)) form the MIF4G 1 domain. Disordered stretches follow at residues 422–444 (NMPD…DIFT) and 487–518 (KSQN…DLEL). Composition is skewed to basic and acidic residues over residues 427-438 (PQDKPTPEEHGP) and 487-511 (KSQN…KEAS). MIF4G domains follow at residues 571–755 (QQLP…YCNP) and 774–984 (RKLL…LRPK). A sufficient for interaction with UPF3A and UPF3B region spans residues 709 to 926 (GRFLFRSPES…IRLVCTILDT (218 aa)). The tract at residues 755–1269 (PPPAEKTVRK…LIFKTGGRRR (515 aa)) is sufficient for interaction with EIF4A1 and EIF1. A binds to UPF3B region spans residues 837–857 (EDVGIHVVDGVLEDIRLGMEV). Residues 1017-1090 (SKDSMTEGEN…KENETDEENA (74 aa)) form a disordered region. Residues 1025-1073 (ENLEEDEEEEEGGAETEEQSGNESEVNEPEEEEGSEEEEEGEEEEEENT) are compositionally biased toward acidic residues. Residues 1081-1269 (KENETDEENA…LIFKTGGRRR (189 aa)) form a sufficient for interaction with UPF1 C-terminus region. A Phosphothreonine modification is found at T1085. 2 interaction with UPF1 regions span residues 1102 to 1126 (VPCV…QQRS) and 1164 to 1204 (DTMP…AEQE). The necessary for interaction with UPF1 stretch occupies residues 1102 to 1195 (VPCVEDEDFI…PMSSQLAANH (94 aa)). Residues 1218-1269 (ERQEQEDYQEMLQSLAQRPAPANTNRERRPRYQHPKGAPNADLIFKTGGRRR) are disordered.

Found in a post-splicing messenger ribonucleoprotein (mRNP) complex. Associates with the exon junction complex (EJC). Interacts with SMG1, EST1A, UPF3A, UPF3B, EIF4A1 and EIF1. Interacts with UPF1; interaction is promoted by TDRD6. Interacts with DDX4. In terms of tissue distribution, localized in male germ cells.

The protein resides in the cytoplasm. The protein localises to the perinuclear region. In terms of biological role, involved in nonsense-mediated decay (NMD) of mRNAs containing premature stop codons by associating with the nuclear exon junction complex (EJC). Recruited by UPF3B associated with the EJC core at the cytoplasmic side of the nuclear envelope and the subsequent formation of an UPF1-UPF2-UPF3 surveillance complex (including UPF1 bound to release factors at the stalled ribosome) is believed to activate NMD. In cooperation with UPF3B stimulates both ATPase and RNA helicase activities of UPF1. Binds spliced mRNA. The sequence is that of Regulator of nonsense transcripts 2 from Mus musculus (Mouse).